Consider the following 300-residue polypeptide: N-carbamoylputrescine amidase (300 aa).

Residues 8–266 form the CN hydrolase domain; that stretch reads VTVAALQFAC…EAVLVAQFDL (259 aa). Glu-47 functions as the Proton acceptor in the catalytic mechanism. Lys-120 functions as the Proton donor in the catalytic mechanism. Cys-157 (nucleophile) is an active-site residue.

This sequence belongs to the carbon-nitrogen hydrolase superfamily. In terms of assembly, homooctamer.

It catalyses the reaction N-carbamoylputrescine + H2O + 2 H(+) = putrescine + NH4(+) + CO2. It participates in amine and polyamine biosynthesis; putrescine biosynthesis via agmatine pathway; putrescine from N-carbamoylputrescine (amidase route): step 1/1. In terms of biological role, involved in polyamine biosynthesis. The sequence is that of N-carbamoylputrescine amidase (CPA) from Solanum tuberosum (Potato).